The sequence spans 156 residues: ATP synthase subunit b (156 aa).

Residues 7-26 (ILGQAIAFVLFVWFCMKYVW) traverse the membrane as a helical segment.

The protein belongs to the ATPase B chain family. F-type ATPases have 2 components, F(1) - the catalytic core - and F(0) - the membrane proton channel. F(1) has five subunits: alpha(3), beta(3), gamma(1), delta(1), epsilon(1). F(0) has three main subunits: a(1), b(2) and c(10-14). The alpha and beta chains form an alternating ring which encloses part of the gamma chain. F(1) is attached to F(0) by a central stalk formed by the gamma and epsilon chains, while a peripheral stalk is formed by the delta and b chains.

It is found in the cell inner membrane. In terms of biological role, f(1)F(0) ATP synthase produces ATP from ADP in the presence of a proton or sodium gradient. F-type ATPases consist of two structural domains, F(1) containing the extramembraneous catalytic core and F(0) containing the membrane proton channel, linked together by a central stalk and a peripheral stalk. During catalysis, ATP synthesis in the catalytic domain of F(1) is coupled via a rotary mechanism of the central stalk subunits to proton translocation. Functionally, component of the F(0) channel, it forms part of the peripheral stalk, linking F(1) to F(0). The chain is ATP synthase subunit b from Pectobacterium atrosepticum (strain SCRI 1043 / ATCC BAA-672) (Erwinia carotovora subsp. atroseptica).